Here is a 36-residue protein sequence, read N- to C-terminus: Gloverin (36 aa).

It localises to the secreted. Its function is as follows. Antibacterial protein. The polypeptide is Gloverin (Heliothis virescens (Tobacco budworm moth)).